We begin with the raw amino-acid sequence, 230 residues long: 2,3-bisphosphoglycerate-dependent phosphoglycerate mutase (230 aa).

Substrate is bound by residues 8–15 (RHGESEWN), 21–22 (TG), arginine 60, 87–90 (ERHY), lysine 98, 114–115 (RR), and 183–184 (GN). Histidine 9 serves as the catalytic Tele-phosphohistidine intermediate. Glutamate 87 (proton donor/acceptor) is an active-site residue.

Belongs to the phosphoglycerate mutase family. BPG-dependent PGAM subfamily.

It carries out the reaction (2R)-2-phosphoglycerate = (2R)-3-phosphoglycerate. The protein operates within carbohydrate degradation; glycolysis; pyruvate from D-glyceraldehyde 3-phosphate: step 3/5. In terms of biological role, catalyzes the interconversion of 2-phosphoglycerate and 3-phosphoglycerate. This chain is 2,3-bisphosphoglycerate-dependent phosphoglycerate mutase, found in Streptococcus agalactiae serotype Ia (strain ATCC 27591 / A909 / CDC SS700).